The primary structure comprises 270 residues: Formamidopyrimidine-DNA glycosylase (270 aa).

The active-site Schiff-base intermediate with DNA is Pro-2. Residue Glu-3 is the Proton donor of the active site. The active-site Proton donor; for beta-elimination activity is the Lys-58. Positions 91, 110, and 151 each coordinate DNA. An FPG-type zinc finger spans residues 236-270; that stretch reads FVYGRGGMPCKLCGTTLREAKLGQRASVYCPRCQR. Arg-260 (proton donor; for delta-elimination activity) is an active-site residue.

This sequence belongs to the FPG family. Monomer. Requires Zn(2+) as cofactor.

It carries out the reaction Hydrolysis of DNA containing ring-opened 7-methylguanine residues, releasing 2,6-diamino-4-hydroxy-5-(N-methyl)formamidopyrimidine.. The catalysed reaction is 2'-deoxyribonucleotide-(2'-deoxyribose 5'-phosphate)-2'-deoxyribonucleotide-DNA = a 3'-end 2'-deoxyribonucleotide-(2,3-dehydro-2,3-deoxyribose 5'-phosphate)-DNA + a 5'-end 5'-phospho-2'-deoxyribonucleoside-DNA + H(+). Its function is as follows. Involved in base excision repair of DNA damaged by oxidation or by mutagenic agents. Acts as a DNA glycosylase that recognizes and removes damaged bases. Has a preference for oxidized purines, such as 7,8-dihydro-8-oxoguanine (8-oxoG). Has AP (apurinic/apyrimidinic) lyase activity and introduces nicks in the DNA strand. Cleaves the DNA backbone by beta-delta elimination to generate a single-strand break at the site of the removed base with both 3'- and 5'-phosphates. This is Formamidopyrimidine-DNA glycosylase from Pseudomonas putida (strain W619).